We begin with the raw amino-acid sequence, 460 residues long: Bifunctional protein GlmU (460 aa).

The interval 1 to 235 is pyrophosphorylase; it reads MALSAAIVLA…PLTVEGVNDR (235 aa). Residues 9-12, Lys-23, Gln-76, and 81-82 each bind UDP-N-acetyl-alpha-D-glucosamine; these read LAAG and GT. Asp-109 lines the Mg(2+) pocket. UDP-N-acetyl-alpha-D-glucosamine-binding residues include Gly-146, Glu-161, Asn-176, and Asn-233. Position 233 (Asn-233) interacts with Mg(2+). Residues 236–256 are linker; that stretch reads VQLAALSKTYNRRVCERWMRD. The segment at 257–460 is N-acetyltransferase; sequence GVTILDPETT…VEGWKPAWER (204 aa). UDP-N-acetyl-alpha-D-glucosamine contacts are provided by Arg-338 and Lys-356. His-368 serves as the catalytic Proton acceptor. 2 residues coordinate UDP-N-acetyl-alpha-D-glucosamine: Tyr-371 and Asn-382. Acetyl-CoA is bound by residues 391–392 and Ala-428; that span reads NY.

The protein in the N-terminal section; belongs to the N-acetylglucosamine-1-phosphate uridyltransferase family. This sequence in the C-terminal section; belongs to the transferase hexapeptide repeat family. As to quaternary structure, homotrimer. Mg(2+) serves as cofactor.

The protein localises to the cytoplasm. The catalysed reaction is alpha-D-glucosamine 1-phosphate + acetyl-CoA = N-acetyl-alpha-D-glucosamine 1-phosphate + CoA + H(+). The enzyme catalyses N-acetyl-alpha-D-glucosamine 1-phosphate + UTP + H(+) = UDP-N-acetyl-alpha-D-glucosamine + diphosphate. It functions in the pathway nucleotide-sugar biosynthesis; UDP-N-acetyl-alpha-D-glucosamine biosynthesis; N-acetyl-alpha-D-glucosamine 1-phosphate from alpha-D-glucosamine 6-phosphate (route II): step 2/2. The protein operates within nucleotide-sugar biosynthesis; UDP-N-acetyl-alpha-D-glucosamine biosynthesis; UDP-N-acetyl-alpha-D-glucosamine from N-acetyl-alpha-D-glucosamine 1-phosphate: step 1/1. Its pathway is bacterial outer membrane biogenesis; LPS lipid A biosynthesis. In terms of biological role, catalyzes the last two sequential reactions in the de novo biosynthetic pathway for UDP-N-acetylglucosamine (UDP-GlcNAc). The C-terminal domain catalyzes the transfer of acetyl group from acetyl coenzyme A to glucosamine-1-phosphate (GlcN-1-P) to produce N-acetylglucosamine-1-phosphate (GlcNAc-1-P), which is converted into UDP-GlcNAc by the transfer of uridine 5-monophosphate (from uridine 5-triphosphate), a reaction catalyzed by the N-terminal domain. The sequence is that of Bifunctional protein GlmU from Bifidobacterium longum (strain NCC 2705).